The chain runs to 929 residues: Isoleucine--tRNA ligase (929 aa).

Positions 58 to 68 (PYANGDIHIGH) match the 'HIGH' region motif. Residue Glu-568 participates in L-isoleucyl-5'-AMP binding. The short motif at 609 to 613 (KMSKS) is the 'KMSKS' region element. Residue Lys-612 coordinates ATP. Zn(2+) is bound by residues Cys-892, Cys-895, Cys-912, and Cys-915.

It belongs to the class-I aminoacyl-tRNA synthetase family. IleS type 1 subfamily. As to quaternary structure, monomer. Zn(2+) is required as a cofactor.

It is found in the cytoplasm. The catalysed reaction is tRNA(Ile) + L-isoleucine + ATP = L-isoleucyl-tRNA(Ile) + AMP + diphosphate. Functionally, catalyzes the attachment of isoleucine to tRNA(Ile). As IleRS can inadvertently accommodate and process structurally similar amino acids such as valine, to avoid such errors it has two additional distinct tRNA(Ile)-dependent editing activities. One activity is designated as 'pretransfer' editing and involves the hydrolysis of activated Val-AMP. The other activity is designated 'posttransfer' editing and involves deacylation of mischarged Val-tRNA(Ile). The protein is Isoleucine--tRNA ligase of Thiobacillus denitrificans (strain ATCC 25259 / T1).